The sequence spans 213 residues: Imidazole glycerol phosphate synthase subunit HisH (213 aa).

The 210-residue stretch at S4–P213 folds into the Glutamine amidotransferase type-1 domain. The Nucleophile role is filled by C83. Catalysis depends on residues H193 and E195.

Heterodimer of HisH and HisF.

The protein localises to the cytoplasm. It carries out the reaction 5-[(5-phospho-1-deoxy-D-ribulos-1-ylimino)methylamino]-1-(5-phospho-beta-D-ribosyl)imidazole-4-carboxamide + L-glutamine = D-erythro-1-(imidazol-4-yl)glycerol 3-phosphate + 5-amino-1-(5-phospho-beta-D-ribosyl)imidazole-4-carboxamide + L-glutamate + H(+). The catalysed reaction is L-glutamine + H2O = L-glutamate + NH4(+). It functions in the pathway amino-acid biosynthesis; L-histidine biosynthesis; L-histidine from 5-phospho-alpha-D-ribose 1-diphosphate: step 5/9. IGPS catalyzes the conversion of PRFAR and glutamine to IGP, AICAR and glutamate. The HisH subunit catalyzes the hydrolysis of glutamine to glutamate and ammonia as part of the synthesis of IGP and AICAR. The resulting ammonia molecule is channeled to the active site of HisF. This is Imidazole glycerol phosphate synthase subunit HisH from Burkholderia lata (strain ATCC 17760 / DSM 23089 / LMG 22485 / NCIMB 9086 / R18194 / 383).